Consider the following 196-residue polypeptide: Transmembrane protein 126A (196 aa).

The Mitochondrial matrix segment spans residues 1–34 (MENHKSNNTKENITIVDISRKINQLPEAERNLLE). A helical membrane pass occupies residues 35–55 (HGSVYVGLNAALCGLIANSLF). Topologically, residues 56-57 (RR) are mitochondrial intermembrane. Residues 58-78 (ILNVTKARIAAGLPMAWIPFL) traverse the membrane as a helical segment. At 79 to 107 (TTDITYRCFVSFPLNTGDLDCETCTITRS) the chain is on the mitochondrial matrix side. The helical transmembrane segment at 108–128 (GLIGLVIGGLYPVFLAIPVNG) threads the bilayer. Topologically, residues 129–159 (GLAARYQSALLPHKGNILSYWIRTSKPVFRK) are mitochondrial intermembrane. The chain crosses the membrane as a helical span at residues 160-176 (MLFPIMLQTMFSAYLGS). Residues 177 to 196 (EQYKLLIKALQLSEPGKEIH) lie on the Mitochondrial matrix side of the membrane.

Belongs to the TMEM126 family. Interacts with OXA1L; promoting cotranslational quality control in mitochondria.

Its subcellular location is the mitochondrion inner membrane. Functionally, protein required for the cotranslational protein quality control in the inner membrane of the mitochondria. Associates with newly synthesized polypeptides and may act as a chaperone that cooperates with OXA1L for the insertion of newly synthesized mitochondrial proteins into the inner membrane. Required for the assembly of the ND4 module of mitochondrial complex I. The chain is Transmembrane protein 126A (TMEM126A) from Pongo abelii (Sumatran orangutan).